The sequence spans 409 residues: DNA primase DnaG (409 aa).

Residues 175–261 (DAIIVVEGRA…EVEELTRKEI (87 aa)) enclose the Toprim domain. Glu181, Asp223, and Asp225 together coordinate Mg(2+). Over residues 280 to 289 (ERPKDKEREK) the composition is skewed to basic and acidic residues. Residues 280-322 (ERPKDKEREKGKKPKPKKRPERRGRPRKKKARPKRGPQERRLL) form a disordered region. Residues 290 to 314 (GKKPKPKKRPERRGRPRKKKARPKR) are compositionally biased toward basic residues.

The protein belongs to the archaeal DnaG primase family. As to quaternary structure, forms a ternary complex with MCM helicase and DNA. Component of the archaeal exosome complex. It depends on Mg(2+) as a cofactor.

It catalyses the reaction ssDNA + n NTP = ssDNA/pppN(pN)n-1 hybrid + (n-1) diphosphate.. RNA polymerase that catalyzes the synthesis of short RNA molecules used as primers for DNA polymerase during DNA replication. Also part of the exosome, which is a complex involved in RNA degradation. Acts as a poly(A)-binding protein that enhances the interaction between heteromeric, adenine-rich transcripts and the exosome. This chain is DNA primase DnaG, found in Methanopyrus kandleri (strain AV19 / DSM 6324 / JCM 9639 / NBRC 100938).